Reading from the N-terminus, the 335-residue chain is Tetraacyldisaccharide 4'-kinase (335 aa).

ATP is bound at residue 59-66 (TAGGNGKT).

The protein belongs to the LpxK family.

The enzyme catalyses a lipid A disaccharide + ATP = a lipid IVA + ADP + H(+). It participates in glycolipid biosynthesis; lipid IV(A) biosynthesis; lipid IV(A) from (3R)-3-hydroxytetradecanoyl-[acyl-carrier-protein] and UDP-N-acetyl-alpha-D-glucosamine: step 6/6. Transfers the gamma-phosphate of ATP to the 4'-position of a tetraacyldisaccharide 1-phosphate intermediate (termed DS-1-P) to form tetraacyldisaccharide 1,4'-bis-phosphate (lipid IVA). The polypeptide is Tetraacyldisaccharide 4'-kinase (Vibrio parahaemolyticus serotype O3:K6 (strain RIMD 2210633)).